Here is a 492-residue protein sequence, read N- to C-terminus: Ribose import ATP-binding protein RbsA (492 aa).

2 ABC transporter domains span residues 3-239 (IDMR…VGRK) and 238-492 (RKLE…TGGK). ATP is bound at residue 35-42 (GENGAGKS).

Belongs to the ABC transporter superfamily. Ribose importer (TC 3.A.1.2.1) family. As to quaternary structure, the complex is composed of an ATP-binding protein (RbsA), two transmembrane proteins (RbsC) and a solute-binding protein (RbsB).

The protein resides in the cell membrane. It catalyses the reaction D-ribose(out) + ATP + H2O = D-ribose(in) + ADP + phosphate + H(+). Its function is as follows. Part of the ABC transporter complex RbsABC involved in ribose import. Responsible for energy coupling to the transport system. The sequence is that of Ribose import ATP-binding protein RbsA from Streptococcus agalactiae serotype III (strain NEM316).